The primary structure comprises 256 residues: MKADPIEILVSNDDGFRAQGIRELAEALRPLGNVTIVAPDGPRSGASAAITSTLPIKLKLRHREEGYTVYSCTGTPVDCVKLAMNTVFKERKPDLLVTGVNHGNNAGICVIYSGTVGAAMEGCVCDVPALAVSLDDHSEICDMSHATAYAVHVSRMILKNGLPQDTMLSMNVPKGKPLGLKPCAVTDGRFVDEYMASEDARGNAVYWMTGRQINKGTIEGDLELMHAGYVTLSPIKLNMTSRRYLPVLEELLKRSV.

D13, D14, S44, and N101 together coordinate a divalent metal cation.

It belongs to the SurE nucleotidase family. Requires a divalent metal cation as cofactor.

The protein resides in the cytoplasm. It catalyses the reaction a ribonucleoside 5'-phosphate + H2O = a ribonucleoside + phosphate. In terms of biological role, nucleotidase that shows phosphatase activity on nucleoside 5'-monophosphates. This chain is 5'-nucleotidase SurE, found in Porphyromonas gingivalis (strain ATCC 33277 / DSM 20709 / CIP 103683 / JCM 12257 / NCTC 11834 / 2561).